We begin with the raw amino-acid sequence, 343 residues long: Olfactory receptor 1E3 (343 aa).

Residues 1-28 (MMKKNQTMISEFLLLGLPIQPEQQNLFY) are Extracellular-facing. A glycan (N-linked (GlcNAc...) asparagine) is linked at Asn5. A helical transmembrane segment spans residues 29 to 49 (ALFLAVYLTTLLGNLLVIVLI). Residues 50 to 107 (RLDSHLHMPMYLCLSNLSFSDLCFSSVTMPKLLQNMQSQNPSIPFADCLAQMYFHLFY) are Cytoplasmic-facing. A disulfide bridge links Cys97 with Cys179. Residues 108–128 (GVLESFLLVVMAYHCYVAICF) traverse the membrane as a helical segment. Over 129–141 (PLHYTTIMSPKCC) the chain is Extracellular. The helical transmembrane segment at 142–162 (LGLLTLSWLLTTAHATLHTLL) threads the bilayer. At 163–195 (MARLSFCAENVIPHFFCDTSTLLKLACSNTQVN) the chain is on the cytoplasmic side. The chain crosses the membrane as a helical span at residues 196-216 (GWVMFFMGGLILVIPFLLLIM). The Extracellular segment spans residues 217–242 (SCARIVSTILRVPSTGGIQKAFSTCG). The helical transmembrane segment at 243-263 (PHLSVVSLFYGTIIGLYLCPL) threads the bilayer. At 264 to 271 (TNHNTVKD) the chain is on the cytoplasmic side. A helical membrane pass occupies residues 272 to 292 (TVMAVMYTGVTHMLNPFIYSL). At 293–310 (RNRDMRGNPGQSLQHKEN) the chain is on the extracellular side. Residues 311 to 331 (FFVFKIVIVGILPLLNLVGVV) traverse the membrane as a helical segment. Residues 332–343 (KLIMKYHSKSVA) are Cytoplasmic-facing.

It belongs to the G-protein coupled receptor 1 family.

The protein localises to the cell membrane. Odorant receptor. In Homo sapiens (Human), this protein is Olfactory receptor 1E3 (OR1E3).